The primary structure comprises 457 residues: Multidrug resistance protein MdtK (457 aa).

12 consecutive transmembrane segments (helical) span residues 11–31 (LLALAIPVILAQIAQTAMGFV), 53–73 (IWLPAILFGHGLLLALTPVIA), 93–113 (WLAGFVSVLIMLVLWNAGYII), 127–147 (AVGYLRALLWGAPGYLFFQVA), 160–180 (GMVMGFIGLLVNIPVNYIFIY), 189–209 (GGVGCGVATAAVYWVMFLAMV), 243–263 (LPIALALFFEVTLFAVVALLV), 276–296 (IALNFSSLMFVLPMSLAAAVT), 314–334 (AARTGLMVGVCMATLTAIFTV), 350–370 (VVTLAAHLMLLAAVYQISDSI), 387–407 (IFYITFTAYWVLGLPSGYILA), and 418–438 (PAGFWIGFIIGLTSAAIMMML).

Belongs to the multi antimicrobial extrusion (MATE) (TC 2.A.66.1) family. MdtK subfamily.

Its subcellular location is the cell inner membrane. Its function is as follows. Multidrug efflux pump that functions probably as a Na(+)/drug antiporter. This Escherichia coli O139:H28 (strain E24377A / ETEC) protein is Multidrug resistance protein MdtK.